Consider the following 271-residue polypeptide: Short-chain dehydrogenase ptmH (271 aa).

Residues I8, T34, K40, D56, N84, Y148, K152, V181, and T183 each contribute to the NADP(+) site. The Proton acceptor role is filled by Y148. The active-site Lowers pKa of active site Tyr is the K152.

Belongs to the short-chain dehydrogenases/reductases (SDR) family.

It functions in the pathway secondary metabolite biosynthesis. Functionally, short-chain dehydrogenase; part of the gene cluster that mediates the biosynthesis of the indole diterpenes penitrems. The geranylgeranyl diphosphate (GGPP) synthase ptmG catalyzes the first step in penitrem biosynthesis via conversion of farnesyl pyrophosphate and isopentyl pyrophosphate into geranylgeranyl pyrophosphate (GGPP). Condensation of indole-3-glycerol phosphate with GGPP by the prenyl transferase ptmC then forms 3-geranylgeranylindole (3-GGI). Epoxidation by the FAD-dependent monooxygenase ptmM leads to a epoxidized-GGI that is substrate of the terpene cyclase ptmB for cyclization to yield paspaline. Paspaline is subsequently converted to 13-desoxypaxilline by the cytochrome P450 monooxygenase ptmP, the latter being then converted to paxilline by the cytochrome P450 monooxygenase ptmQ. Paxilline is converted to beta-paxitriol via C-10 ketoreduction by the short-chain dehydrogenase ptmH which can be monoprenylated at the C-20 by the indole diterpene prenyltransferase ptmD. A two-step elimination (acetylation and elimination) process performed by the O-acetyltransferase ptmV and ptmI leads to the production of the prenylated form of penijanthine. The FAD-linked oxidoreductase ptmO then converts the prenylated form of penijanthine into PC-M5 which is in turn transformed into PC-M4 by the aromatic dimethylallyltransferase ptmE. Five sequential oxidative transformations performed by the cytochrome P450 monooxygenases ptmK, ptmU, ptmL, ptmN and ptmJ yield the various penitrem compounds. PtmK, ptmU and ptmM are involved in the formation of the key bicyclic ring of penitrem C via the formation of the intermediates secopenitrem D and penitrem D. PtmL catalyzes the epoxidation of penitrem D and C to yield penitrem B and F, respectively. PtmJ catalyzes the last benzylic hydroxylation to convert penitrem B to prenitrem E and penitrem F to penitrem A. This is Short-chain dehydrogenase ptmH from Penicillium ochrochloron.